The sequence spans 127 residues: I-Kappa-B like protein J1 (127 aa).

ANK repeat units follow at residues 43–76 and 81–111; these read HGNTCLHIATEEHRGRQAIWLIEKLVEYGADLDE and DGDTVLHMAVKKGDYKLATWMCQQLSMRFGS.

The protein belongs to the polydnaviridae I-Kappa-B-like protein family.

Suppresses the host immune response through NF-kappa-B inactivation. Possesses ankyrin repeat domains required for NF-kappa-B binding but lacks the regulatory regions required for dissociation from NF-kappa-B and degradation. Therefore, prevents host NF-kappa-B release and subsequent activation. The chain is I-Kappa-B like protein J1 (J2) from Microplitis demolitor (Parasitoid wasp).